The chain runs to 56 residues: Large ribosomal subunit protein bL33 (56 aa).

The protein belongs to the bacterial ribosomal protein bL33 family.

This Vibrio vulnificus (strain YJ016) protein is Large ribosomal subunit protein bL33.